The sequence spans 211 residues: Ribonuclease HII (211 aa).

An RNase H type-2 domain is found at 1–205; that stretch reads MRFGVDEAGK…CDDVLAAASQ (205 aa). A divalent metal cation-binding residues include D6, E7, and D100.

This sequence belongs to the RNase HII family. Requires Mn(2+) as cofactor. The cofactor is Mg(2+).

Its subcellular location is the cytoplasm. The enzyme catalyses Endonucleolytic cleavage to 5'-phosphomonoester.. Functionally, endonuclease that specifically degrades the RNA of RNA-DNA hybrids. The sequence is that of Ribonuclease HII from Haloarcula marismortui (strain ATCC 43049 / DSM 3752 / JCM 8966 / VKM B-1809) (Halobacterium marismortui).